A 419-amino-acid polypeptide reads, in one-letter code: tRNA modification GTPase MnmE (419 aa).

3 residues coordinate (6S)-5-formyl-5,6,7,8-tetrahydrofolate: Arg2, Glu59, and Arg99. Residues 197 to 343 (GLSVVIAGPP…LHTMIVEMAR (147 aa)) enclose the TrmE-type G domain. Asn207 serves as a coordination point for K(+). Residues 207-212 (NAGKST), 226-232 (SPVAGTT), and 251-254 (DTAG) contribute to the GTP site. Position 211 (Ser211) interacts with Mg(2+). The K(+) site is built by Ser226, Val228, and Thr231. Thr232 provides a ligand contact to Mg(2+). Lys419 contacts (6S)-5-formyl-5,6,7,8-tetrahydrofolate.

It belongs to the TRAFAC class TrmE-Era-EngA-EngB-Septin-like GTPase superfamily. TrmE GTPase family. As to quaternary structure, homodimer. Heterotetramer of two MnmE and two MnmG subunits. It depends on K(+) as a cofactor.

Its subcellular location is the cytoplasm. Exhibits a very high intrinsic GTPase hydrolysis rate. Involved in the addition of a carboxymethylaminomethyl (cmnm) group at the wobble position (U34) of certain tRNAs, forming tRNA-cmnm(5)s(2)U34. This is tRNA modification GTPase MnmE from Sphingopyxis alaskensis (strain DSM 13593 / LMG 18877 / RB2256) (Sphingomonas alaskensis).